Consider the following 450-residue polypeptide: Tubulin beta chain (450 aa).

GTP-binding residues include E69, S138, G142, T143, G144, N204, and N226. E69 contributes to the Mg(2+) binding site. The segment at 427–450 is disordered; sequence DATIDQEFEDEEEVEEQNDDSDEQ. The segment covering 430 to 450 has biased composition (acidic residues); sequence IDQEFEDEEEVEEQNDDSDEQ.

Belongs to the tubulin family. As to quaternary structure, dimer of alpha and beta chains. A typical microtubule is a hollow water-filled tube with an outer diameter of 25 nm and an inner diameter of 15 nM. Alpha-beta heterodimers associate head-to-tail to form protofilaments running lengthwise along the microtubule wall with the beta-tubulin subunit facing the microtubule plus end conferring a structural polarity. Microtubules usually have 13 protofilaments but different protofilament numbers can be found in some organisms and specialized cells. It depends on Mg(2+) as a cofactor.

The protein resides in the cytoplasm. It localises to the cytoskeleton. In terms of biological role, tubulin is the major constituent of microtubules, a cylinder consisting of laterally associated linear protofilaments composed of alpha- and beta-tubulin heterodimers. Microtubules grow by the addition of GTP-tubulin dimers to the microtubule end, where a stabilizing cap forms. Below the cap, tubulin dimers are in GDP-bound state, owing to GTPase activity of alpha-tubulin. This chain is Tubulin beta chain, found in Bombyx mori (Silk moth).